Here is a 443-residue protein sequence, read N- to C-terminus: ATP-dependent protease ATPase subunit HslU (443 aa).

ATP is bound by residues I18, 60 to 65 (GVGKTE), D256, E321, and R393.

This sequence belongs to the ClpX chaperone family. HslU subfamily. In terms of assembly, a double ring-shaped homohexamer of HslV is capped on each side by a ring-shaped HslU homohexamer. The assembly of the HslU/HslV complex is dependent on binding of ATP.

It is found in the cytoplasm. Functionally, ATPase subunit of a proteasome-like degradation complex; this subunit has chaperone activity. The binding of ATP and its subsequent hydrolysis by HslU are essential for unfolding of protein substrates subsequently hydrolyzed by HslV. HslU recognizes the N-terminal part of its protein substrates and unfolds these before they are guided to HslV for hydrolysis. The polypeptide is ATP-dependent protease ATPase subunit HslU (Escherichia fergusonii (strain ATCC 35469 / DSM 13698 / CCUG 18766 / IAM 14443 / JCM 21226 / LMG 7866 / NBRC 102419 / NCTC 12128 / CDC 0568-73)).